Here is a 750-residue protein sequence, read N- to C-terminus: MIIRSPEPEVKILVDRDPIKTSFEEWAKPGHFSRTIAKGPDTTTWIWNLHADAHDFDSHTSDLEEISRKVFSAHFGQLSIIFLWLSGMYFHGARFSNYEAWLSDPTHIGPSAQVVWPIVGQEILNGDVGGGFRGIQITSGFFQIWRASGITSELQLYCTAIGALVFAALMLFAGWFHYHKAAPKLAWFQDVESMLNHHLAGLLGLGSLSWAGHQVHVSLPINQFLNAGVDPKEIPLPHEFILNRDLLAQLYPSFAEGATPFFTLNWSKYSEFLTFRGGLDPVTGGLWLTDIAHHHLAIAILFLLAGHMYRTNWGIGHGLKDILEAHKGPFTGQGHKGLYEILTTSWHAQLSLNLAMLGSLTIVVAHHMYSMPPYPYLATDYATQLSLFTHHMWIGGFLIVGAAAHAAIFMVRDYDPTNRYNDLLDRVLRHRDAIISHLNWVCIFLGFHSFGLYIHNDTMSALGRPQDMFSDTAIQLQPVFAQWIQNTHALAPGVTAPGETASTSLTWGGGELVTVGGKVALLPIPLGTADFLVHHIHAFTIHVTVLILLKGVLFARSSRLIPDKANLGFRFPCDGPGRGGTCQVSAWDHVFLGLFWMYNAISVVIFHFSWKMQSDVWGSISDQGVVTHITGGNFAQSSITINGWLRDFLWAQASQVIQSYGSSLSAYGLFFLGAHFVWAFSLMFLFSGRGYWQELIESIVWAHNKLKVAPATQPRALSIVQGRAVGVTHYLLGGIATTWAFFLARIIAVG.

8 consecutive transmembrane segments (helical) span residues 70-93 (VFSA…FHGA), 156-179 (LYCT…FHYH), 195-219 (LNHH…HVSL), 291-309 (IAHH…GHMY), 346-369 (WHAQ…HHMY), 385-411 (LSLF…IFMV), 433-455 (AIIS…LYIH), and 531-549 (FLVH…LILL). [4Fe-4S] cluster-binding residues include Cys573 and Cys582. 2 consecutive transmembrane segments (helical) span residues 589 to 610 (HVFL…HFSW) and 664 to 686 (LSAY…MFLF). His675 is a binding site for chlorophyll a'. Residues Met683 and Tyr691 each contribute to the chlorophyll a site. Trp692 provides a ligand contact to phylloquinone. The chain crosses the membrane as a helical span at residues 724-744 (AVGVTHYLLGGIATTWAFFLA).

This sequence belongs to the PsaA/PsaB family. In terms of assembly, the PsaA/B heterodimer binds the P700 chlorophyll special pair and subsequent electron acceptors. PSI consists of a core antenna complex that captures photons, and an electron transfer chain that converts photonic excitation into a charge separation. The eukaryotic PSI reaction center is composed of at least 11 subunits. The cofactor is P700 is a chlorophyll a/chlorophyll a' dimer, A0 is one or more chlorophyll a, A1 is one or both phylloquinones and FX is a shared 4Fe-4S iron-sulfur center..

Its subcellular location is the plastid. It localises to the chloroplast thylakoid membrane. The catalysed reaction is reduced [plastocyanin] + hnu + oxidized [2Fe-2S]-[ferredoxin] = oxidized [plastocyanin] + reduced [2Fe-2S]-[ferredoxin]. PsaA and PsaB bind P700, the primary electron donor of photosystem I (PSI), as well as the electron acceptors A0, A1 and FX. PSI is a plastocyanin-ferredoxin oxidoreductase, converting photonic excitation into a charge separation, which transfers an electron from the donor P700 chlorophyll pair to the spectroscopically characterized acceptors A0, A1, FX, FA and FB in turn. Oxidized P700 is reduced on the lumenal side of the thylakoid membrane by plastocyanin. The sequence is that of Photosystem I P700 chlorophyll a apoprotein A1 from Arabis hirsuta (Hairy rock-cress).